A 266-amino-acid polypeptide reads, in one-letter code: MDTFQVIILALIQGLTEFLPISSSAHLILPAELLGWEDQGLSFDVAVNTGSLLAVVIYFRHELWNMFTAWIASIFKGKQSDDSKLAWWIILATLPAVFFGFMAKDFIETHLRSAEVIAVTTIVFGLLLWWADKMSHQDLTVYQTGWRKALLIGFAQALALIPGTSRSGATMTAALMLGLSRDAAARFSFLMSVPVSLGAAILVGKDLSESSLPIDYQALTLGTLVSFVAAYLCIHYFLKIISRMGMTPFVIYRLILGAVLCGFIFL.

The next 8 helical transmembrane spans lie at 1 to 21, 39 to 59, 87 to 107, 111 to 131, 149 to 169, 183 to 203, 218 to 238, and 246 to 266; these read MDTF…FLPI, QGLS…VIYF, WWII…KDFI, LRSA…LWWA, ALLI…RSGA, AAAR…AILV, ALTL…HYFL, and MTPF…FIFL.

It belongs to the UppP family.

Its subcellular location is the cell inner membrane. The enzyme catalyses di-trans,octa-cis-undecaprenyl diphosphate + H2O = di-trans,octa-cis-undecaprenyl phosphate + phosphate + H(+). Functionally, catalyzes the dephosphorylation of undecaprenyl diphosphate (UPP). Confers resistance to bacitracin. The sequence is that of Undecaprenyl-diphosphatase from Shewanella putrefaciens (strain CN-32 / ATCC BAA-453).